We begin with the raw amino-acid sequence, 55 residues long: Large ribosomal subunit protein bL33 (55 aa).

Belongs to the bacterial ribosomal protein bL33 family.

The sequence is that of Large ribosomal subunit protein bL33 (rpmG) from Nitrobacter hamburgensis (strain DSM 10229 / NCIMB 13809 / X14).